Consider the following 507-residue polypeptide: MNKVPLLEMRNITKSFGKFQALKGVDLTVFSGEIHALMGENGAGKSTLMKILAGAYTTTSGEILIEGRPWSIKGPKDALNAGISLIYQEMQLAPNLTVAENIFLGSELSRGGLVQRKEMVMQTQAVIDRLGAQFKASDLVMGLTIAEQQQVEIARALHRNSRILVMDEPTAALSTRETHRLFELILRLRDEGMAIIYISHRMAEVYELSDRVSVLRDGQYVGSLMRANLNANELVRMMVGRPLSDLFNKERDIPLGHLRLKVHHLTDGAKVQAVSLQVRSGEIVGLAGLVGAGRSELAQLIFGVRKATGGTIEIDGVPLVIHSPREAIRHGIGFLTENRKEQGLFLELAAQDNITMATLERDACYGLLDRKKARAISDDAINRLNIRVPHAQVRAGGLSGGNQQKLLISRWVAISPRILILDEPTRGVDVGAKSEIYRIMSQMAREGVAILMISSELPEVVGMSDRVYVMHEGRIAGELHHPDITQENIMTLATGVTEDHKKEVYHD.

ABC transporter domains follow at residues 7-242 and 253-497; these read LEMR…VGRP and IPLG…TGVT. 39–46 contacts ATP; sequence GENGAGKS.

This sequence belongs to the ABC transporter superfamily. Ribose importer (TC 3.A.1.2.1) family. In terms of assembly, the complex is composed of an ATP-binding protein (RbsA), two transmembrane proteins (RbsC) and a solute-binding protein (RbsB).

It is found in the cell inner membrane. The catalysed reaction is D-ribose(out) + ATP + H2O = D-ribose(in) + ADP + phosphate + H(+). In terms of biological role, part of the ABC transporter complex RbsABC involved in ribose import. Responsible for energy coupling to the transport system. This chain is Ribose import ATP-binding protein RbsA, found in Yersinia pestis bv. Antiqua (strain Antiqua).